The primary structure comprises 203 residues: MKKLLVACCLLSGLISAHALADASSDLQARLGKVNSFHANFSQKVTSSEGTAVQEGEGELWVKRPNLFNWHMTSPDESVLISDGETLWFYNPFVEQATATWLKNATGNTPFMLITRNNPDDWKQYNVKQKGDDFELTPKSASGNLKQFAITVTPTGTIKSFTAVEQDGQRSAYTLKGQQNSSADASKFKFTLPKGVTLDDQRQ.

An N-terminal signal peptide occupies residues 1-21 (MKKLLVACCLLSGLISAHALA).

Belongs to the LolA family. Monomer.

The protein localises to the periplasm. Participates in the translocation of lipoproteins from the inner membrane to the outer membrane. Only forms a complex with a lipoprotein if the residue after the N-terminal Cys is not an aspartate (The Asp acts as a targeting signal to indicate that the lipoprotein should stay in the inner membrane). The polypeptide is Outer-membrane lipoprotein carrier protein (Yersinia enterocolitica serotype O:8 / biotype 1B (strain NCTC 13174 / 8081)).